We begin with the raw amino-acid sequence, 554 residues long: Glucose-6-phosphate isomerase (554 aa).

Glutamate 359 serves as the catalytic Proton donor. Residues histidine 390 and lysine 518 contribute to the active site.

Belongs to the GPI family.

It localises to the cytoplasm. The enzyme catalyses alpha-D-glucose 6-phosphate = beta-D-fructose 6-phosphate. It functions in the pathway carbohydrate biosynthesis; gluconeogenesis. Its pathway is carbohydrate degradation; glycolysis; D-glyceraldehyde 3-phosphate and glycerone phosphate from D-glucose: step 2/4. Functionally, catalyzes the reversible isomerization of glucose-6-phosphate to fructose-6-phosphate. The sequence is that of Glucose-6-phosphate isomerase from Pseudomonas entomophila (strain L48).